Reading from the N-terminus, the 464-residue chain is Chitotriosidase-1 (464 aa).

The first 21 residues, 1–21, serve as a signal peptide directing secretion; the sequence is MVQSLAWAGVMTLLMVQWGSA. Residues 22–386 form the GH18 domain; the sequence is AKLVCYLTNW…RTLRQELNLP (365 aa). A disulfide bridge connects residues C26 and C51. Residues 70-71 and 97-100 each bind chitin; these read EH and GGWT. Residue E140 is the Proton donor of the active site. 210-213 contributes to the chitin binding site; the sequence is MAYD. C307 and C368 form a disulfide bridge. The disordered stretch occupies residues 385–416; the sequence is LPSETPRSPEQIIPEPRPSSMPEQGPSPGLDN. The Chitin-binding type-2 domain maps to 415-464; sequence DNFCQGKADGVYPNPGDESTYYNCGGGRLFQQSCPPGLVFRASCKCCTWS. C448 and C461 are disulfide-bonded.

This sequence belongs to the glycosyl hydrolase 18 family. Chitinase class II subfamily. In terms of assembly, monomer. In terms of tissue distribution, highly expressed in tongue, stomach, kidney, brain, skin, testis, and bone marrow. Low level of expression was found in lung, heart, spleen, small intestine, and liver. Not detectable in pancreas, salivary gland, large intestine, uterus, or peripheral blood mononuclear cells (PBMC).

It is found in the secreted. It localises to the lysosome. It carries out the reaction Random endo-hydrolysis of N-acetyl-beta-D-glucosaminide (1-&gt;4)-beta-linkages in chitin and chitodextrins.. Degrades chitin, chitotriose and chitobiose. May participate in the defense against nematodes and other pathogens. This chain is Chitotriosidase-1 (Chit1), found in Mus musculus (Mouse).